The chain runs to 536 residues: Phosphoenolpyruvate carboxykinase (ATP) (536 aa).

Arg61, Tyr195, and Lys201 together coordinate substrate. ATP contacts are provided by residues Lys201, His220, and 236-244; that span reads GLSGTGKTT. Mn(2+) contacts are provided by Lys201 and His220. Asp257 serves as a coordination point for Mn(2+). ATP contacts are provided by Glu285, Arg323, and Thr448. Arg323 contributes to the substrate binding site.

It belongs to the phosphoenolpyruvate carboxykinase (ATP) family. Mn(2+) serves as cofactor.

Its subcellular location is the cytoplasm. The enzyme catalyses oxaloacetate + ATP = phosphoenolpyruvate + ADP + CO2. It participates in carbohydrate biosynthesis; gluconeogenesis. Its function is as follows. Involved in the gluconeogenesis. Catalyzes the conversion of oxaloacetate (OAA) to phosphoenolpyruvate (PEP) through direct phosphoryl transfer between the nucleoside triphosphate and OAA. This Methylobacterium nodulans (strain LMG 21967 / CNCM I-2342 / ORS 2060) protein is Phosphoenolpyruvate carboxykinase (ATP).